The primary structure comprises 394 residues: Protein DDI1 homolog 2 (394 aa).

The 81-residue stretch at 1–81 (MLITVYCVRR…VILRQRETPE (81 aa)) folds into the Ubiquitin-like domain. The interval 82–128 (ARPAAPFPGLDFSTIAVPGSSSQPAPSQPQAPPPPPPDTSSFPQGLD) is disordered. The span at 107-119 (PSQPQAPPPPPPD) shows a compositional bias: pro residues. The active site involves D247. A Ubiquitin-binding motif is present at residues 371–390 (EEIADRELAEVLQKSAEEAD).

Belongs to the DDI1 family. In terms of assembly, homodimer.

The protein localises to the cytoplasm. The protein resides in the cytosol. It is found in the chromosome. Its function is as follows. Aspartic protease that mediates the cleavage of NFE2L1/NRF1 at 'Leu-104', thereby promoting release of NFE2L1/NRF1 from the endoplasmic reticulum membrane. Ubiquitination of NFE2L1/NRF1 is a prerequisite for cleavage, suggesting that DDI2 specifically recognizes and binds ubiquitinated NFE2L1/NRF1. Seems to act as a proteasomal shuttle which links the proteasome and replication fork proteins like RTF2. Required for cellular survival following replication stress. This Xenopus tropicalis (Western clawed frog) protein is Protein DDI1 homolog 2 (ddi2).